Reading from the N-terminus, the 429-residue chain is Enolase (429 aa).

Glutamine 162 contacts (2R)-2-phosphoglycerate. Residue glutamate 204 is the Proton donor of the active site. Mg(2+) contacts are provided by aspartate 241, glutamate 283, and aspartate 310. Lysine 335, arginine 364, serine 365, and lysine 386 together coordinate (2R)-2-phosphoglycerate. The active-site Proton acceptor is lysine 335.

Belongs to the enolase family. Mg(2+) is required as a cofactor.

It is found in the cytoplasm. The protein localises to the secreted. It localises to the cell surface. It carries out the reaction (2R)-2-phosphoglycerate = phosphoenolpyruvate + H2O. It functions in the pathway carbohydrate degradation; glycolysis; pyruvate from D-glyceraldehyde 3-phosphate: step 4/5. Functionally, catalyzes the reversible conversion of 2-phosphoglycerate (2-PG) into phosphoenolpyruvate (PEP). It is essential for the degradation of carbohydrates via glycolysis. This chain is Enolase, found in Mycobacterium tuberculosis (strain ATCC 25177 / H37Ra).